A 156-amino-acid chain; its full sequence is SsrA-binding protein (156 aa).

The disordered stretch occupies residues 130–156 (KFDKRDDLKKKDAKRDIDRALRDKQKY). The span at 132–156 (DKRDDLKKKDAKRDIDRALRDKQKY) shows a compositional bias: basic and acidic residues.

This sequence belongs to the SmpB family.

It is found in the cytoplasm. In terms of biological role, required for rescue of stalled ribosomes mediated by trans-translation. Binds to transfer-messenger RNA (tmRNA), required for stable association of tmRNA with ribosomes. tmRNA and SmpB together mimic tRNA shape, replacing the anticodon stem-loop with SmpB. tmRNA is encoded by the ssrA gene; the 2 termini fold to resemble tRNA(Ala) and it encodes a 'tag peptide', a short internal open reading frame. During trans-translation Ala-aminoacylated tmRNA acts like a tRNA, entering the A-site of stalled ribosomes, displacing the stalled mRNA. The ribosome then switches to translate the ORF on the tmRNA; the nascent peptide is terminated with the 'tag peptide' encoded by the tmRNA and targeted for degradation. The ribosome is freed to recommence translation, which seems to be the essential function of trans-translation. This Exiguobacterium sibiricum (strain DSM 17290 / CCUG 55495 / CIP 109462 / JCM 13490 / 255-15) protein is SsrA-binding protein.